Reading from the N-terminus, the 629-residue chain is DNA mismatch repair protein MutL (629 aa).

The disordered stretch occupies residues 376–396; that stretch reads QYHEKPQQNQPHFSNTPVLPN. Residues 382–396 show a composition bias toward polar residues; sequence QQNQPHFSNTPVLPN.

Belongs to the DNA mismatch repair MutL/HexB family.

This protein is involved in the repair of mismatches in DNA. It is required for dam-dependent methyl-directed DNA mismatch repair. May act as a 'molecular matchmaker', a protein that promotes the formation of a stable complex between two or more DNA-binding proteins in an ATP-dependent manner without itself being part of a final effector complex. This chain is DNA mismatch repair protein MutL, found in Haemophilus influenzae (strain PittEE).